Reading from the N-terminus, the 319-residue chain is MEDSEKRKQMLKAMRMEAAAQNDDDATTGTETSMSTGHLSNPLAETSNHQQDSFETQRFDYYTDPMAAYSSFKKNKTPKQQYISSPSHQGSSPVPPQFPPSVPPGSLCSEYQAQTNHGGFHAAHYEPRGMAHLSPSHRGPPAGWNNNFRPPPVNHSGPPQWVPRPFPFSQEMPNMGNNRFGGRGSYNNTPPQFSNYGRQNANWGGNTYPNSGRGRSRGRGMNTSFGRDGGRRPMEPGAERFYSNSMAEDPWKHLKPVLWKNCSDASSSSSTGQAWLPKSIAPKKSVTSEATHKTSSNQQSLAEYLAASLDGATCDESSN.

3 disordered regions span residues 1 to 59 (MEDS…TQRF), 71 to 239 (SFKK…PGAE), and 262 to 299 (CSDASSSSSTGQAWLPKSIAPKKSVTSEATHKTSSNQQ). Composition is skewed to polar residues over residues 27 to 56 (TTGTETSMSTGHLSNPLAETSNHQQDSFET) and 78 to 88 (PKQQYISSPSH). The span at 93–103 (PVPPQFPPSVP) shows a compositional bias: pro residues. Residues 185-210 (SYNNTPPQFSNYGRQNANWGGNTYPN) show a composition bias toward polar residues. Over residues 228–238 (DGGRRPMEPGA) the composition is skewed to basic and acidic residues. Positions 285-299 (SVTSEATHKTSSNQQ) are enriched in polar residues.

In terms of assembly, interacts with ubiquitin thioesterases UBP12 and UBP13, and with protein phosphatase 2A subunits PP2AB1, PP2AB2, PP2A3, PP2A4, PP2AA1 and PP2AA2. As to expression, expressed in the shoot apical meristem (SAM), embryos, seedlings, root tips, and root and leaf primordia.

It localises to the nucleus. The protein localises to the cytoplasm. Its subcellular location is the cytosol. Functionally, involved in miRNAs and siRNAs biogenesis and thus promotes gene silencing. Modulates auxin (IAA) transport-related developmental programs by regulating protein phosphatase 2A (PP2As)-driven auxin efflux carrier PIN proteins recycling and polarity. Required during development. Necessary for abiotic stress (e.g. chilling and salt) tolerance. The chain is Protein SICKLE from Arabidopsis thaliana (Mouse-ear cress).